We begin with the raw amino-acid sequence, 389 residues long: Protein Wnt-10b (389 aa).

A signal peptide spans 1–28; it reads MLEEPRPRPPPSGLAGLLFLALCSRALS. A Phosphothreonine modification is found at Thr46. 11 cysteine pairs are disulfide-bonded: Cys83–Cys94, Cys136–Cys144, Cys146–Cys199, Cys247–Cys261, Cys249–Cys256, Cys318–Cys349, Cys334–Cys344, Cys348–Cys388, Cys364–Cys379, Cys366–Cys376, and Cys371–Cys372. Asn93 is a glycosylation site (N-linked (GlcNAc...) asparagine). Residues 171-197 form a disordered region; it reads KSFPHSLPSPGPGSSPSPGPQDTWEWG. Residues 177–189 show a composition bias toward pro residues; it reads LPSPGPGSSPSPG. A lipid anchor (O-palmitoleoyl serine; by PORCN) is attached at Ser253. Asn335 is a glycosylation site (N-linked (GlcNAc...) asparagine).

This sequence belongs to the Wnt family. In terms of assembly, forms a soluble 1:1 complex with AFM; this prevents oligomerization and is required for prolonged biological activity. The complex with AFM may represent the physiological form in body fluids. In terms of processing, palmitoleoylation is required for efficient binding to frizzled receptors. Depalmitoleoylation leads to Wnt signaling pathway inhibition. In terms of tissue distribution, detected in most adult tissues. Highest levels were found in heart and skeletal muscle. Low levels are found in brain.

The protein resides in the secreted. Its subcellular location is the extracellular space. It is found in the extracellular matrix. In terms of biological role, member of the Wnt ligand gene family that encodes for secreted proteins, which activate the Wnt signaling cascade. Specifically activates canonical Wnt/beta-catenin signaling and thus triggers beta-catenin/LEF/TCF-mediated transcriptional programs. Involved in signaling networks controlling stemness, pluripotency and cell fate decisions. Acts in the immune system, mammary gland, adipose tissue, bone and skin. This chain is Protein Wnt-10b (WNT10B), found in Homo sapiens (Human).